Consider the following 145-residue polypeptide: D-aminoacyl-tRNA deacylase (145 aa).

The Gly-cisPro motif, important for rejection of L-amino acids signature appears at 137-138; the sequence is GP.

It belongs to the DTD family. Homodimer.

Its subcellular location is the cytoplasm. It catalyses the reaction glycyl-tRNA(Ala) + H2O = tRNA(Ala) + glycine + H(+). It carries out the reaction a D-aminoacyl-tRNA + H2O = a tRNA + a D-alpha-amino acid + H(+). An aminoacyl-tRNA editing enzyme that deacylates mischarged D-aminoacyl-tRNAs. Also deacylates mischarged glycyl-tRNA(Ala), protecting cells against glycine mischarging by AlaRS. Acts via tRNA-based rather than protein-based catalysis; rejects L-amino acids rather than detecting D-amino acids in the active site. By recycling D-aminoacyl-tRNA to D-amino acids and free tRNA molecules, this enzyme counteracts the toxicity associated with the formation of D-aminoacyl-tRNA entities in vivo and helps enforce protein L-homochirality. This chain is D-aminoacyl-tRNA deacylase, found in Klebsiella pneumoniae subsp. pneumoniae (strain ATCC 700721 / MGH 78578).